A 30-amino-acid chain; its full sequence is Bowman-Birk type proteinase inhibitor 3 (30 aa).

2 cysteine pairs are disulfide-bonded: Cys-9/Cys-24 and Cys-14/Cys-22.

Functionally, inhibits trypsin (IC(50)=4.90 nM) and, to a lesser extent, alpha-chymotrypsin (IC(50)=1.87 uM). This is Bowman-Birk type proteinase inhibitor 3 from Lathyrus sativus (White vetchling).